Consider the following 374-residue polypeptide: Putative F-box protein At5g60060 (374 aa).

Positions 9–61 constitute an F-box domain; the sequence is SQWSDLPLDILELISDRLDHDSSDTIHLLCLRSVCATWRLSLPLSNKNNRLSK.

This Arabidopsis thaliana (Mouse-ear cress) protein is Putative F-box protein At5g60060.